The sequence spans 207 residues: Small ribosomal subunit protein uS4 (207 aa).

The interval 31-54 is disordered; it reads KSKFETKPGQHGRTSGSRTSDFGL. The segment covering 42–52 has biased composition (polar residues); the sequence is GRTSGSRTSDF. Positions 97–158 constitute an S4 RNA-binding domain; sequence SRLDNVVYRM…KAKKQLRVTE (62 aa).

It belongs to the universal ribosomal protein uS4 family. In terms of assembly, part of the 30S ribosomal subunit. Contacts protein S5. The interaction surface between S4 and S5 is involved in control of translational fidelity.

Functionally, one of the primary rRNA binding proteins, it binds directly to 16S rRNA where it nucleates assembly of the body of the 30S subunit. Its function is as follows. With S5 and S12 plays an important role in translational accuracy. This chain is Small ribosomal subunit protein uS4, found in Methylibium petroleiphilum (strain ATCC BAA-1232 / LMG 22953 / PM1).